An 87-amino-acid polypeptide reads, in one-letter code: Cell division protein FtsL (87 aa).

Residues 1-3 (MSR) lie on the Cytoplasmic side of the membrane. A helical transmembrane segment spans residues 4 to 23 (LLLIVLLACSIASAIGVVYM). Over 24 to 87 (RHMHRKLFVQ…ETSDIVVIRP (64 aa)) the chain is Periplasmic.

This sequence belongs to the FtsL family. Part of a complex composed of FtsB, FtsL and FtsQ.

It is found in the cell inner membrane. In terms of biological role, essential cell division protein. May link together the upstream cell division proteins, which are predominantly cytoplasmic, with the downstream cell division proteins, which are predominantly periplasmic. The polypeptide is Cell division protein FtsL (Xanthomonas campestris pv. campestris (strain ATCC 33913 / DSM 3586 / NCPPB 528 / LMG 568 / P 25)).